The sequence spans 167 residues: MNNKHPKNKAKSTTTPKTIALNKRARHEYHLIERHEAGLELQGWEVKAIRAGRANLGDGYAYVRDGEIFLIGAQITPLIQASTHVVANDRRTRKLLLHRRQIDTLIGRVQREGFTLVPTAMYWSKNRVKMEIALAKGKQAHDKRHAEKEREWQRDKQRIMRAHNRNA.

Residues 139-167 (QAHDKRHAEKEREWQRDKQRIMRAHNRNA) are disordered. Residues 144-158 (RHAEKEREWQRDKQR) show a composition bias toward basic and acidic residues.

It belongs to the SmpB family.

It localises to the cytoplasm. Its function is as follows. Required for rescue of stalled ribosomes mediated by trans-translation. Binds to transfer-messenger RNA (tmRNA), required for stable association of tmRNA with ribosomes. tmRNA and SmpB together mimic tRNA shape, replacing the anticodon stem-loop with SmpB. tmRNA is encoded by the ssrA gene; the 2 termini fold to resemble tRNA(Ala) and it encodes a 'tag peptide', a short internal open reading frame. During trans-translation Ala-aminoacylated tmRNA acts like a tRNA, entering the A-site of stalled ribosomes, displacing the stalled mRNA. The ribosome then switches to translate the ORF on the tmRNA; the nascent peptide is terminated with the 'tag peptide' encoded by the tmRNA and targeted for degradation. The ribosome is freed to recommence translation, which seems to be the essential function of trans-translation. The protein is SsrA-binding protein of Xylella fastidiosa (strain M12).